Here is a 143-residue protein sequence, read N- to C-terminus: Snake venom vascular endothelial growth factor toxin (143 aa).

A signal peptide spans 1 to 24 (MAVYLLAVAILFCIQGWPSGTVQG). E25 carries the pyrrolidone carboxylic acid (Glu) modification. Cystine bridges form between C38–C80, C69–C115, and C73–C117. A disordered region spans residues 117-143 (CRPRSPGDVNDGRNPKEGEPRARFPFV).

This sequence belongs to the PDGF/VEGF growth factor family. Snake venom VEGF subfamily. In terms of assembly, homodimer; disulfide-linked. Interacts with VEGF receptor-1 (FLT1) with a high affinity, whereas it binds to VEGF receptor-2 (KDR) with a low affinity. Does not bind to VEGFR-3/FLT4 and neuropilin-1 (NRP1). Expressed by the venom gland.

It localises to the secreted. Its function is as follows. Snake venom VEGFs may contribute to venom dispersion and prey subjugation by inducing vascular permeability and hypotension. This protein activates the vascular endothelial growth factor receptor-1 (VEGFR-1/FLT1), and consequently promotes the proliferation and tissue factor production of endothelial cells, the neovascularization in the chicken chorioallantoic membrane, and increases vascular permeability. Also stimulates tissue-factor production and human monocyte chemotaxis. This chain is Snake venom vascular endothelial growth factor toxin, found in Protobothrops mucrosquamatus (Taiwan habu).